The following is a 361-amino-acid chain: MFQILMENVEVQHIDRIAALLIFFTSFIGFACNTFIAFYIRRLSLLRNSFGRLLQLQAAGDAVFVLVWAFYFAPVLFFDIKPLQSLAIAARFAQLCLICYDISIYTHLVISLNRFISLYFPTSYQNIFTERFTTFLICSIIFVSFGFSWFLVIRDCQMGFSIPRWMLDYVSPPCEMINVYYAEFFRGLIVISMFAITNSFTFCRMHMHNRKKQTATVFETTQQKKRRAVETRFVQQVTMQGLLYVIELVTYFYISLRFPVPLEPVELAKSSNRWPNFLLTTYAWILVHALDGVITLIFNKQFRSVLRHPCRSQEALNISKTPSRRSRFTTNRDESNRKKSSILACTFISNSNTGYGSSVHV.

A run of 7 helical transmembrane segments spans residues Leu-20 to Ile-40, Ala-58 to Phe-78, Phe-92 to Leu-112, Thr-133 to Ile-153, Met-176 to Ile-196, Leu-242 to Leu-262, and Leu-278 to Phe-298. An N-linked (GlcNAc...) asparagine glycan is attached at Asn-317.

This sequence belongs to the G-protein coupled receptor 1 family.

It is found in the cell membrane. This Caenorhabditis elegans protein is Serpentine receptor class X 45 (srx-45).